Reading from the N-terminus, the 552-residue chain is Putative transport protein Spro_0050 (552 aa).

6 consecutive transmembrane segments (helical) span residues I4 to W24, I26 to F46, F65 to S85, F96 to A116, V117 to G137, and M158 to I178. 2 consecutive RCK C-terminal domains span residues A192–E276 and D279–N361. Transmembrane regions (helical) follow at residues M371–I391, G393–L413, I439–I459, L464–L484, Y493–A513, and V530–W550.

It belongs to the AAE transporter (TC 2.A.81) family. YidE subfamily.

It is found in the cell membrane. In Serratia proteamaculans (strain 568), this protein is Putative transport protein Spro_0050.